We begin with the raw amino-acid sequence, 65 residues long: Large ribosomal subunit protein bL35 (65 aa).

A compositionally biased stretch (basic and acidic residues) spans 1–10 (MPKMKTDRGA). The tract at residues 1–24 (MPKMKTDRGAAKRFKKTGSGGFKC) is disordered.

Belongs to the bacterial ribosomal protein bL35 family.

This chain is Large ribosomal subunit protein bL35, found in Tolumonas auensis (strain DSM 9187 / NBRC 110442 / TA 4).